The primary structure comprises 117 residues: UPF0122 protein TTE1463 (117 aa).

This sequence belongs to the UPF0122 family.

Its function is as follows. Might take part in the signal recognition particle (SRP) pathway. This is inferred from the conservation of its genetic proximity to ftsY/ffh. May be a regulatory protein. This chain is UPF0122 protein TTE1463, found in Caldanaerobacter subterraneus subsp. tengcongensis (strain DSM 15242 / JCM 11007 / NBRC 100824 / MB4) (Thermoanaerobacter tengcongensis).